Here is a 63-residue protein sequence, read N- to C-terminus: Large ribosomal subunit protein bL28 (63 aa).

The protein belongs to the bacterial ribosomal protein bL28 family.

The polypeptide is Large ribosomal subunit protein bL28 (Solibacter usitatus (strain Ellin6076)).